The chain runs to 194 residues: Large ribosomal subunit protein bL17 (194 aa).

A disordered region spans residues 126–194 (AEPKQTKART…SPEQTNKQEE (69 aa)). Residues 131-140 (TKARTRRGKG) are compositionally biased toward basic residues. Polar residues-rich tracts occupy residues 144 to 161 (ATTTVSSEKTQPNTQDMA) and 181 to 194 (LDTQSPEQTNKQEE).

It belongs to the bacterial ribosomal protein bL17 family. Part of the 50S ribosomal subunit. Contacts protein L32.

The protein is Large ribosomal subunit protein bL17 of Amoebophilus asiaticus (strain 5a2).